Consider the following 216-residue polypeptide: Corrinoid protein DSY3155 (216 aa).

A B12-binding N-terminal domain is found at 1 to 90; it reads MIMSLLDELK…EIAKKGMSEG (90 aa). The 124-residue stretch at 93 to 216 folds into the B12-binding domain; sequence KGKIVLGTVE…VELANKILGK (124 aa). H106 contributes to the methylcob(III)alamin binding site.

The protein belongs to the methylamine corrinoid protein family.

Functionally, probably harbors a corrinoid prosthetic group and acts as a methyl group carrier between MtgB and MtgA. A methyl group from glycine betaine is likely first transferred to the corrinoid prosthetic group of the enzyme by MtgB, and then transferred to tetrahydrofolate (THF) by MtgA. The methyl group may then be ultimately converted to carbon dioxide, and its oxidation would also provide reducing equivalents for anaerobic respiration. Thus, may function in the pathway that allows anaerobic methylotrophic growth of D.hafniense using glycine betaine. The chain is Corrinoid protein DSY3155 from Desulfitobacterium hafniense (strain Y51).